Here is a 570-residue protein sequence, read N- to C-terminus: KH homology domain-containing protein 4 (570 aa).

The tract at residues 1–29 (MSFGVPHSGGSRRSKWDQAGPDADAGSAP) is disordered. 2 consecutive KH domains span residues 77–157 (DDLV…RIKE) and 210–292 (VFVG…NLLQ). The segment covering 391–407 (PPTAPVPPKLTAPPNPP) has biased composition (pro residues). 3 disordered regions span residues 391-410 (PPTA…PQKR), 438-500 (AGMP…EPQV), and 512-570 (GDSS…WMAP). The segment at 427 to 497 (QHGPIHMTNL…ESPSAPSLLE (71 aa)) is required for nuclear retention. The segment covering 553–562 (TQTAPQPTQQ) has biased composition (low complexity).

It belongs to the KHDC4 family. In terms of assembly, interacts with PRPF19.

The protein resides in the nucleus. Its subcellular location is the cytoplasm. In terms of biological role, RNA-binding protein involved in pre-mRNA splicing. Interacts with the PRP19C/Prp19 complex/NTC/Nineteen complex which is part of the spliceosome. Involved in regulating splice site selection. Binds preferentially RNA with A/C rich sequences and poly-C stretches. This Danio rerio (Zebrafish) protein is KH homology domain-containing protein 4 (khdc4).